The chain runs to 622 residues: E3 ubiquitin-protein ligase hrd-1 (622 aa).

Residues 1–23 (MRVSAGLMIGGSCVATAATVLNA) form the signal peptide. Topologically, residues 24–41 (FVINKQFYPSIVYLSKSN) are lumenal. The chain crosses the membrane as a helical span at residues 42-62 (ASMAVLYFQGIVLVYLMFQLL). The Cytoplasmic portion of the chain corresponds to 63-99 (KSILFGDLRAAEAEHLSERTWHAVLETCLAFTVFRDD). The helical transmembrane segment at 100-120 (FSAMFVMQFIGLLFIKCFHWL) threads the bilayer. Residues 121–141 (ADDRVDMMERSPVITLRFHLR) lie on the Lumenal side of the membrane. Residues 142–162 (MMTVLAALGFADSYFVSSAYF) form a helical membrane-spanning segment. The Cytoplasmic portion of the chain corresponds to 163 to 170 (STITKGAS). A helical membrane pass occupies residues 171–191 (SQIVFGFEYAILLALVLHVTI). The Lumenal portion of the chain corresponds to 192–215 (KYLLHMHDLRNPQSWDNKAVYLLY). The chain crosses the membrane as a helical span at residues 216–236 (AELLINLIRCVLYGFFAVIML). Over 237–622 (RVHTFPLFSV…RFPPPNPEHE (386 aa)) the chain is Cytoplasmic. An RING-type; atypical zinc finger spans residues 292–333 (CIICREEMTVESSPKRLPCSHVFHAHCLRSWFQRQQTCPTCR). The segment covering 436-445 (MPPPPIPQPN) has biased composition (pro residues). Disordered regions lie at residues 436–463 (MPPP…PNFD) and 514–622 (PVPT…PEHE). Positions 526 to 538 (ATASSVPTSVPSE) are enriched in low complexity. The segment covering 562–577 (FNDTQSTSTPSTSAGP) has biased composition (polar residues). Low complexity predominate over residues 579-596 (PSLTPSTSSVPSTSSVRT).

This sequence belongs to the HRD1 family. As to quaternary structure, homodimer.

Its subcellular location is the endoplasmic reticulum membrane. The catalysed reaction is S-ubiquitinyl-[E2 ubiquitin-conjugating enzyme]-L-cysteine + [acceptor protein]-L-lysine = [E2 ubiquitin-conjugating enzyme]-L-cysteine + N(6)-ubiquitinyl-[acceptor protein]-L-lysine.. Its pathway is protein modification; protein ubiquitination. Its function is as follows. Acts as an E3 ubiquitin-protein ligase which accepts ubiquitin specifically from endoplasmic reticulum-associated ubc-7 E2 ligase and transfers it to substrates, promoting their degradation. Component of the endoplasmic reticulum quality control (ERQC) system, which is also called the ER-associated degradation (ERAD) system, involved in ubiquitin-dependent degradation of misfolded endoplasmic reticulum proteins. Also promotes the degradation of normal but naturally short-lived proteins. Protects cells from ER stress-induced apoptosis. Thought to play a role together with hsp-3 in developmental growth and function of intestinal cells and to play a role together with hsp-4 in gonad formation. The sequence is that of E3 ubiquitin-protein ligase hrd-1 from Caenorhabditis briggsae.